We begin with the raw amino-acid sequence, 125 residues long: Large ribosomal subunit protein bL12 (125 aa).

The protein belongs to the bacterial ribosomal protein bL12 family. As to quaternary structure, homodimer. Part of the ribosomal stalk of the 50S ribosomal subunit. Forms a multimeric L10(L12)X complex, where L10 forms an elongated spine to which 2 to 4 L12 dimers bind in a sequential fashion. Binds GTP-bound translation factors.

Functionally, forms part of the ribosomal stalk which helps the ribosome interact with GTP-bound translation factors. Is thus essential for accurate translation. This Rickettsia conorii (strain ATCC VR-613 / Malish 7) protein is Large ribosomal subunit protein bL12.